We begin with the raw amino-acid sequence, 405 residues long: mRNA cap guanine-N(7) methyltransferase (405 aa).

Positions 1–78 (MDNILNPEDN…PRLEEGHGSL (78 aa)) are disordered. 2 stretches are compositionally biased toward polar residues: residues 9–18 (DNVSQTNTET) and 36–45 (KFTASGQNLD). Over residues 58 to 75 (KAGEPESPSKRPRLEEGH) the composition is skewed to basic and acidic residues. Residues 97–404 (SRIFHLRNFN…IYLLFAFEKQ (308 aa)) enclose the mRNA cap 0 methyltransferase domain. 106 to 107 (NN) lines the mRNA pocket. Residues K110, G134, D156, D190, Q213, and Y218 each coordinate S-adenosyl-L-methionine.

Belongs to the class I-like SAM-binding methyltransferase superfamily. mRNA cap 0 methyltransferase family.

The protein resides in the nucleus. The enzyme catalyses a 5'-end (5'-triphosphoguanosine)-ribonucleoside in mRNA + S-adenosyl-L-methionine = a 5'-end (N(7)-methyl 5'-triphosphoguanosine)-ribonucleoside in mRNA + S-adenosyl-L-homocysteine. Catalytic subunit of the mRNA-capping methyltransferase RNMT:RAMAC complex that methylates the N7 position of the added guanosine to the 5'-cap structure of mRNAs. Binds RNA containing 5'-terminal GpppC. The protein is mRNA cap guanine-N(7) methyltransferase (rnmt) of Xenopus tropicalis (Western clawed frog).